The following is an 846-amino-acid chain: MAP7 domain-containing protein 1 (846 aa).

2 disordered regions span residues 1–153 (MESG…ERAK) and 186–210 (EQRL…EKNK). Pro residues predominate over residues 24–41 (EPRPSPEGDPSPPPPPTP). Residues T49 and T53 each carry the phosphothreonine modification. Phosphoserine is present on S95. At T99 the chain carries Phosphothreonine. The span at 113-123 (RSSQPSPTTVP) shows a compositional bias: low complexity. A phosphoserine mark is found at S115 and S118. The residue at position 120 (T120) is a Phosphothreonine. Phosphoserine is present on residues S125 and S127. A coiled-coil region spans residues 130 to 224 (AKQDVKKAGE…AAIQRSVKKT (95 aa)). A compositionally biased stretch (basic and acidic residues) spans 132–153 (QDVKKAGERHKLAKERREERAK). A phosphoserine mark is found at S256, S275, S315, S368, and S401. Positions 318–816 (TLPRNGRDQG…KGTAGDKSLG (499 aa)) are disordered. Basic and acidic residues predominate over residues 407–437 (RRLEATPVQKKEKKDKERENEKEKSALARER). Residues 414 to 443 (VQKKEKKDKERENEKEKSALARERNLKKRQ) adopt a coiled-coil conformation. Phosphoserine occurs at positions 444, 448, 454, and 460. The segment covering 460-471 (SPKSKARPSSPS) has biased composition (low complexity). Residue K462 forms a Glycyl lysine isopeptide (Lys-Gly) (interchain with G-Cter in SUMO2) linkage. Phosphoserine is present on residues S479 and S496. The span at 479 to 497 (SPCPSPGPGHALPPKPPSP) shows a compositional bias: pro residues. A compositionally biased stretch (basic and acidic residues) spans 523–539 (PEDKNHRKSRAAEEKEP). Over residues 542–556 (PASPAPSPVPSPTPA) the composition is skewed to pro residues. Phosphoserine is present on residues S544, S548, and S552. T554 is modified (phosphothreonine). Positions 568–579 (PAETAVPAVPAA) are enriched in low complexity. Residues 599 to 740 (TTDREEATRL…AETKKQDAKE (142 aa)) adopt a coiled-coil conformation. Basic and acidic residues predominate over residues 600–740 (TDREEATRLL…AETKKQDAKE (141 aa)). At T818 the chain carries Phosphothreonine.

It belongs to the MAP7 family.

The protein resides in the cytoplasm. Its subcellular location is the cytoskeleton. The protein localises to the spindle. It is found in the microtubule organizing center. It localises to the centrosome. The protein resides in the midbody. In terms of biological role, microtubule-stabilizing protein involved in the control of cell motility and neurite outgrowth. Facilitate microtubule stabilization through the maintenance of acetylated stable microtubules. The chain is MAP7 domain-containing protein 1 (Map7d1) from Mus musculus (Mouse).